Consider the following 32-residue polypeptide: Dermaseptin-L1 (32 aa).

In terms of tissue distribution, expressed by the skin glands.

It localises to the secreted. Antimicrobial peptide active against the Gram-negative bacterium E.coli (MIC=8 uM) but inactive against the Gram-positive bacterium S.aureus. Also inhibits growth of zoospores of the chytrid fungus B.dendrobatidis at high concentrations (above 25 uM). Shows anticancer activities since it is cytolytic against HepG2 human hepatoma-derived cells (LC(50)=45 uM). Is only weakly hemolytic on human erythrocytes. The protein is Dermaseptin-L1 of Agalychnis lemur (Lemur leaf frog).